Here is a 48-residue protein sequence, read N- to C-terminus: Keratin-associated protein 22-1 (48 aa).

In terms of assembly, interacts with hair keratins.

Its function is as follows. In the hair cortex, hair keratin intermediate filaments are embedded in an interfilamentous matrix, consisting of hair keratin-associated proteins (KRTAP), which are essential for the formation of a rigid and resistant hair shaft through their extensive disulfide bond cross-linking with abundant cysteine residues of hair keratins. The matrix proteins include the high-sulfur and high-glycine-tyrosine keratins. This is Keratin-associated protein 22-1 (KRTAP22-1) from Homo sapiens (Human).